Here is a 388-residue protein sequence, read N- to C-terminus: Basigin (388 aa).

Residues Met1–Ala21 form the signal peptide. Topologically, residues Thr27–Val323 are extracellular. The Ig-like domain maps to Asp43 to Lys131. 2 disulfides stabilise this stretch: Cys49/Cys113 and Cys162/Cys211. Positions Glu143–Val218 constitute an Ig-like C2-type domain. N-linked (GlcNAc...) asparagine glycosylation is found at Asn163, Asn222, Asn280, Asn286, and Asn307. The 95-residue stretch at Pro229–Val323 folds into the Ig-like V-type domain. Cysteines 250 and 306 form a disulfide. A helical membrane pass occupies residues Arg324–Val344. The Cytoplasmic portion of the chain corresponds to Thr345–Asn388. Positions Glu358 to Asn388 are disordered.

In terms of assembly, interacts with NXNL1, SLC2A1 and SLC16A1. N-glycosylated. In terms of tissue distribution, retinal cone photoreceptors (at protein level). As to expression, brain endothelial cells, kidney epithelial cells and erythroblasts (at protein level).

It is found in the cell membrane. Its subcellular location is the photoreceptor inner segment. The protein resides in the cell projection. It localises to the cilium. The protein localises to the photoreceptor outer segment. It is found in the endoplasmic reticulum membrane. Its subcellular location is the basolateral cell membrane. In terms of biological role, essential for normal retinal maturation and development. Acts as a retinal cell surface receptor for NXNL1 and plays an important role in NXNL1-mediated survival of retinal cone photoreceptors. In association with glucose transporter SLC16A1/GLUT1 and NXNL1, promotes retinal cone survival by enhancing aerobic glycolysis and accelerating the entry of glucose into photoreceptors. Functionally, signaling receptor for cyclophilins, essential for PPIA/CYPA and PPIB/CYPB-dependent signaling related to chemotaxis and adhesion of immune cells. Plays an important role in targeting the monocarboxylate transporters SLC16A1/GLUT1, SLC16A3, SLC16A8, SLC16A11 and SLC16A12 to the plasma membrane. Acts as a coreceptor for vascular endothelial growth factor receptor 2 (KDR/VEGFR2) in endothelial cells enhancing its VEGFA-mediated activation and downstream signaling. Promotes angiogenesis through EPAS1/HIF2A-mediated up-regulation of VEGFA and KDR/VEGFR2 in endothelial cells. This Gallus gallus (Chicken) protein is Basigin (BSG).